The following is a 390-amino-acid chain: MAGIEGFAAIRGKLAQSEAAPGIVLIACAALALLIANSPLAAAWHALFHHPLPWTPVAKLDTLHLWINDGLMAVFFFVVGLEIKREVLAGELSDARRRRLPVLAAVAGMAVPALIYLAITAGQPALHRGWAIPSATDIAFAIGVLALVGRGLPPSLRLFLLTVAIVDDLGAVVVIALFYTSGLKLAWLGASALILAALVLVNRMGVRALLPYLAGAVALWYTVLHSGIHATVAGVLAAMTVPLALNRRHDSPLLRLEHALVAPNGFVIVPLFGLANAGVALGADFGESPALPLGIAMGLLLGKQFGILGSILVAERLGFAHRPEGASLRHLWGIALLCGIGFTMSLFIAGLAFPETPMLVEEAKLGILGGSLVSALAGLLVLRGSGRPVV.

Helical transmembrane passes span 23 to 43 (IVLI…LAAA), 63 to 83 (LHLW…GLEI), 100 to 120 (LPVL…LAIT), 129 to 149 (GWAI…ALVG), 158 to 178 (LFLL…IALF), 181 to 201 (SGLK…LVLV), 208 to 228 (ALLP…HSGI), 265 to 285 (GFVI…GADF), 293 to 313 (LGIA…SILV), 331 to 351 (LWGI…IAGL), and 362 to 382 (EAKL…LLVL).

The protein belongs to the NhaA Na(+)/H(+) (TC 2.A.33) antiporter family.

The protein localises to the cell inner membrane. The enzyme catalyses Na(+)(in) + 2 H(+)(out) = Na(+)(out) + 2 H(+)(in). Na(+)/H(+) antiporter that extrudes sodium in exchange for external protons. This is Na(+)/H(+) antiporter NhaA 2 from Novosphingobium aromaticivorans (strain ATCC 700278 / DSM 12444 / CCUG 56034 / CIP 105152 / NBRC 16084 / F199).